Here is a 350-residue protein sequence, read N- to C-terminus: UDP-N-acetylenolpyruvoylglucosamine reductase (350 aa).

An FAD-binding PCMH-type domain is found at 24-195; sequence HVDATARWLL…VAVEFNLPLL (172 aa). Arg172 is a catalytic residue. The Proton donor role is filled by Ser245. Glu342 is a catalytic residue.

This sequence belongs to the MurB family. It depends on FAD as a cofactor.

The protein resides in the cytoplasm. It carries out the reaction UDP-N-acetyl-alpha-D-muramate + NADP(+) = UDP-N-acetyl-3-O-(1-carboxyvinyl)-alpha-D-glucosamine + NADPH + H(+). Its pathway is cell wall biogenesis; peptidoglycan biosynthesis. In terms of biological role, cell wall formation. This chain is UDP-N-acetylenolpyruvoylglucosamine reductase, found in Xanthomonas campestris pv. campestris (strain 8004).